Consider the following 205-residue polypeptide: Meiotic nuclear division protein 1 homolog (205 aa).

Residue serine 2 is modified to N-acetylserine. A coiled-coil region spans residues 83–173 (KRKLEALNSQ…EAANRWTDNI (91 aa)).

This sequence belongs to the MND1 family. As to quaternary structure, heterodimer with PSMC3IP/HOP2. MND1-PSMC3IP interacts with DMC1 and RAD51 and binds to ssDNA and dsDNA showing no preference for either form of DNA.

The protein resides in the nucleus. Functionally, required for proper homologous chromosome pairing and efficient cross-over and intragenic recombination during meiosis. Stimulates both DMC1- and RAD51-mediated homologous strand assimilation, which is required for the resolution of meiotic double-strand breaks. This Mus musculus (Mouse) protein is Meiotic nuclear division protein 1 homolog.